The sequence spans 396 residues: Elongation factor Tu (396 aa).

The tr-type G domain occupies 10–206 (KPHVNVGTIG…ALDTFIPEPT (197 aa)). The interval 19–26 (GHVDHGKT) is G1. Position 19–26 (19–26 (GHVDHGKT)) interacts with GTP. Residue Thr26 participates in Mg(2+) binding. The tract at residues 60–64 (GITIS) is G2. The segment at 81–84 (DCPG) is G3. Residues 81-85 (DCPGH) and 136-139 (NKAD) contribute to the GTP site. Positions 136-139 (NKAD) are G4. The tract at residues 174–176 (SAR) is G5.

This sequence belongs to the TRAFAC class translation factor GTPase superfamily. Classic translation factor GTPase family. EF-Tu/EF-1A subfamily. As to quaternary structure, monomer.

It is found in the cytoplasm. It catalyses the reaction GTP + H2O = GDP + phosphate + H(+). In terms of biological role, GTP hydrolase that promotes the GTP-dependent binding of aminoacyl-tRNA to the A-site of ribosomes during protein biosynthesis. This chain is Elongation factor Tu, found in Xanthomonas oryzae pv. oryzae (strain MAFF 311018).